Here is a 307-residue protein sequence, read N- to C-terminus: Nicotinamide/nicotinic acid mononucleotide adenylyltransferase 2 (307 aa).

2 residues coordinate NAD(+): S16 and F17. ATP is bound at residue H24. NAD(+)-binding residues include W92 and T95. S-palmitoyl cysteine attachment occurs at residues C164 and C165. Residues G200, D202, L212, W213, and R232 each contribute to the NAD(+) site. Residue 271–274 (TKSR) participates in ATP binding.

This sequence belongs to the eukaryotic NMN adenylyltransferase family. As to quaternary structure, monomer. Requires Mg(2+) as cofactor. Degraded in response to injured neurite. Degradation is caused by polyubiquitination by MYCBP2 after recognition by FBXO45. Post-translationally, palmitoylated; palmitoylation is required for membrane association.

Its subcellular location is the golgi apparatus membrane. It localises to the cytoplasmic vesicle membrane. The protein localises to the cytoplasm. The protein resides in the cell projection. It is found in the axon. It catalyses the reaction beta-nicotinamide D-ribonucleotide + ATP + H(+) = diphosphate + NAD(+). It carries out the reaction nicotinate beta-D-ribonucleotide + ATP + H(+) = deamido-NAD(+) + diphosphate. It functions in the pathway cofactor biosynthesis; NAD(+) biosynthesis; NAD(+) from nicotinamide D-ribonucleotide: step 1/1. Its pathway is cofactor biosynthesis; NAD(+) biosynthesis; deamido-NAD(+) from nicotinate D-ribonucleotide: step 1/1. Its activity is regulated as follows. Inhibited by P1-(adenosine-5')-P3-(nicotinamide-riboside-5')-triphosphate (Np3AD) and P1-(adenosine-5')-P4-(nicotinamide-riboside-5')-tetraphosphate (Np4AD). Functionally, nicotinamide/nicotinate-nucleotide adenylyltransferase that acts as an axon maintenance factor. Axon survival factor required for the maintenance of healthy axons: acts by delaying Wallerian axon degeneration, an evolutionarily conserved process that drives the loss of damaged axons. Catalyzes the formation of NAD(+) from nicotinamide mononucleotide (NMN) and ATP. Can also use the deamidated form; nicotinic acid mononucleotide (NaMN) as substrate but with a lower efficiency. Cannot use triazofurin monophosphate (TrMP) as substrate. Also catalyzes the reverse reaction, i.e. the pyrophosphorolytic cleavage of NAD(+). For the pyrophosphorolytic activity prefers NAD(+), NADH and NaAD as substrates and degrades nicotinic acid adenine dinucleotide phosphate (NHD) less effectively. Fails to cleave phosphorylated dinucleotides NADP(+), NADPH and NaADP(+). Also acts as an activator of ADP-ribosylation by supporting the catalytic activity of PARP16 and promoting mono-ADP-ribosylation of ribosomes by PARP16. May be involved in the maintenance of axonal integrity. The protein is Nicotinamide/nicotinic acid mononucleotide adenylyltransferase 2 (NMNAT2) of Pongo abelii (Sumatran orangutan).